Here is a 129-residue protein sequence, read N- to C-terminus: Small ribosomal subunit protein uS11 (129 aa).

Belongs to the universal ribosomal protein uS11 family. In terms of assembly, part of the 30S ribosomal subunit. Interacts with proteins S7 and S18. Binds to IF-3.

In terms of biological role, located on the platform of the 30S subunit, it bridges several disparate RNA helices of the 16S rRNA. Forms part of the Shine-Dalgarno cleft in the 70S ribosome. The chain is Small ribosomal subunit protein uS11 from Haemophilus influenzae (strain ATCC 51907 / DSM 11121 / KW20 / Rd).